The primary structure comprises 231 residues: Phosphatidate cytidylyltransferase (231 aa).

6 consecutive transmembrane segments (helical) span residues 33–53, 67–87, 95–115, 133–153, 167–187, and 206–226; these read FVVAILWLKPLFYVLMILVAI, IMYLLIGLIIIPIPISLLIFL, WLIMLYFCIVWSVDIFAMIGG, WSGLITGILSAGLVATLISFI, IYLFIISCTLALTAQLSDLFI, and HGGVLDRFDSIILTAPILFFI.

Belongs to the CDS family.

It localises to the cell membrane. The enzyme catalyses a 1,2-diacyl-sn-glycero-3-phosphate + CTP + H(+) = a CDP-1,2-diacyl-sn-glycerol + diphosphate. Its pathway is phospholipid metabolism; CDP-diacylglycerol biosynthesis; CDP-diacylglycerol from sn-glycerol 3-phosphate: step 3/3. This is Phosphatidate cytidylyltransferase (cdsA) from Rickettsia bellii (strain RML369-C).